The sequence spans 394 residues: Ribulose bisphosphate carboxylase large chain (394 aa).

Lysine 5 is modified (N6,N6,N6-trimethyllysine). The substrate site is built by asparagine 114 and threonine 164. The active-site Proton acceptor is lysine 166. Lysine 168 is a binding site for substrate. Mg(2+)-binding residues include lysine 192, aspartate 194, and glutamate 195. Lysine 192 is subject to N6-carboxylysine. Residue histidine 285 is the Proton acceptor of the active site. Positions 286, 318, and 370 each coordinate substrate.

Belongs to the RuBisCO large chain family. Type I subfamily. As to quaternary structure, heterohexadecamer of 8 large chains and 8 small chains. It depends on Mg(2+) as a cofactor.

It is found in the plastid. It localises to the chloroplast. The enzyme catalyses 2 (2R)-3-phosphoglycerate + 2 H(+) = D-ribulose 1,5-bisphosphate + CO2 + H2O. It catalyses the reaction D-ribulose 1,5-bisphosphate + O2 = 2-phosphoglycolate + (2R)-3-phosphoglycerate + 2 H(+). Its function is as follows. RuBisCO catalyzes two reactions: the carboxylation of D-ribulose 1,5-bisphosphate, the primary event in carbon dioxide fixation, as well as the oxidative fragmentation of the pentose substrate in the photorespiration process. Both reactions occur simultaneously and in competition at the same active site. The protein is Ribulose bisphosphate carboxylase large chain (rbcL) of Barclaya longifolia (Orchid lily).